The following is a 364-amino-acid chain: Carbamoyl phosphate synthase pyrimidine-specific small chain (364 aa).

The segment at 1 to 171 is CPSase; it reads MKRRLVLENG…AYPSPGRGKR (171 aa). Residues serine 45, glycine 219, and glycine 221 each coordinate L-glutamine. The region spanning 171–356 is the Glutamine amidotransferase type-1 domain; it reads RIVLVDFGMK…IEMIETTEKE (186 aa). Cysteine 246 (nucleophile) is an active-site residue. Residues leucine 247, glutamine 250, asparagine 288, glycine 290, and tyrosine 291 each coordinate L-glutamine. Residues histidine 329 and glutamate 331 contribute to the active site.

It belongs to the CarA family. As to quaternary structure, composed of two chains; the small (or glutamine) chain promotes the hydrolysis of glutamine to ammonia, which is used by the large (or ammonia) chain to synthesize carbamoyl phosphate. Tetramer of heterodimers (alpha,beta)4. Interacts with BrxC.

The enzyme catalyses hydrogencarbonate + L-glutamine + 2 ATP + H2O = carbamoyl phosphate + L-glutamate + 2 ADP + phosphate + 2 H(+). It catalyses the reaction L-glutamine + H2O = L-glutamate + NH4(+). Its pathway is pyrimidine metabolism; UMP biosynthesis via de novo pathway; (S)-dihydroorotate from bicarbonate: step 1/3. Small subunit of the glutamine-dependent carbamoyl phosphate synthetase (CPSase). CPSase catalyzes the formation of carbamoyl phosphate from the ammonia moiety of glutamine, carbonate, and phosphate donated by ATP, constituting the first step of the biosynthetic pathway leading to arginine and/or urea. The small subunit (glutamine amidotransferase) binds and cleaves glutamine to supply the large subunit with the substrate ammonia. The chain is Carbamoyl phosphate synthase pyrimidine-specific small chain from Bacillus subtilis (strain 168).